A 274-amino-acid polypeptide reads, in one-letter code: NH(3)-dependent NAD(+) synthetase (274 aa).

Glycine 46 to serine 53 provides a ligand contact to ATP. Aspartate 52 provides a ligand contact to Mg(2+). Position 140 (arginine 140) interacts with deamido-NAD(+). ATP is bound at residue threonine 160. Glutamate 165 is a Mg(2+) binding site. Deamido-NAD(+)-binding residues include lysine 173 and aspartate 180. The ATP site is built by lysine 189 and threonine 211. Histidine 260–lysine 261 is a binding site for deamido-NAD(+).

It belongs to the NAD synthetase family. In terms of assembly, homodimer.

It catalyses the reaction deamido-NAD(+) + NH4(+) + ATP = AMP + diphosphate + NAD(+) + H(+). It participates in cofactor biosynthesis; NAD(+) biosynthesis; NAD(+) from deamido-NAD(+) (ammonia route): step 1/1. Catalyzes the ATP-dependent amidation of deamido-NAD to form NAD. Uses ammonia as a nitrogen source. The protein is NH(3)-dependent NAD(+) synthetase of Streptococcus pyogenes serotype M2 (strain MGAS10270).